A 492-amino-acid chain; its full sequence is V-type proton ATPase subunit B 1 (492 aa).

The protein belongs to the ATPase alpha/beta chains family. In terms of assembly, V-ATPase is a heteromultimeric enzyme composed of a peripheral catalytic V1 complex (main components: subunits A, B, C, D, E, and F) attached to an integral membrane V0 proton pore complex (main component: the proteolipid protein).

Its function is as follows. Non-catalytic subunit of the peripheral V1 complex of vacuolar ATPase. V-ATPase is responsible for acidifying a variety of intracellular compartments in eukaryotic cells. In Acetabularia acetabulum (Mermaid's wine glass), this protein is V-type proton ATPase subunit B 1.